The sequence spans 625 residues: Vitamin B12 transporter BtuB (625 aa).

Positions 1-21 (MTIKKYTLLTALSVTAFSGWA) are cleaved as a signal peptide. Positions 31–38 (DEMVVTAN) match the TonB box motif. The TBDR plug domain maps to 43 to 157 (PKSSVLAPVD…IGGVINILTG (115 aa)). Cyanocob(III)alamin is bound by residues serine 90, asparagine 97, and 115–116 (IT). Residues 160-625 (KPGTTLSAGL…EYYFTGSYNF (466 aa)) form the TBDR beta-barrel domain. 3 beta stranded membrane-spanning segments follow: residues 163–170 (TTLSAGLG), 174–183 (YQTYDGSTQQ), and 189–200 (TTVTLAGNYTYS). Ca(2+) contacts are provided by aspartate 204, glutamine 217, aspartate 219, and aspartate 221. Transmembrane regions (beta stranded) follow at residues 223–233 (FMGKMLWAGLE) and 238–254 (EQFN…NRSD). Ca(2+) contacts are provided by tyrosine 255, aspartate 256, and aspartate 269. The next 14 beta stranded transmembrane spans lie at 271 to 285 (RKLS…LRYK), 287 to 304 (GIYA…KDYN), 317 to 333 (SLDE…NTFQ), 336 to 345 (NGMISAGADW), 363 to 379 (FTQH…QQIS), 381 to 391 (VTLEGAVRSDD), 395 to 410 (FGWH…WEFI), 413 to 427 (YRLI…KAPN), 445 to 454 (ESKQWEGGVE), 460 to 469 (LTWRLSAYRN), 484 to 501 (YFNI…TGSF), 505 to 520 (PLSH…PRNA), 528 to 540 (RRAK…QLDW), and 546 to 561 (DWSV…YDKD). A cyanocob(III)alamin-binding site is contributed by serine 317. Residue arginine 528 coordinates cyanocob(III)alamin. Tyrosine 562 is a cyanocob(III)alamin binding site. Beta stranded transmembrane passes span 569-583 (TVEL…LAVS), 596-607 (IANLFDKDYEMV), and 613-625 (PGRE…SYNF). The TonB C-terminal box motif lies at 608–625 (YGYQTPGREYYFTGSYNF).

The protein belongs to the TonB-dependent receptor family. BtuB (TC 1.B.14.3.1) subfamily.

The protein resides in the cell outer membrane. Functionally, involved in the active translocation of vitamin B12 (cyanocobalamin) across the outer membrane to the periplasmic space. It derives its energy for transport by interacting with the trans-periplasmic membrane protein TonB. In Yersinia pestis bv. Antiqua (strain Antiqua), this protein is Vitamin B12 transporter BtuB.